Here is a 518-residue protein sequence, read N- to C-terminus: Cytochrome P450 1A1 (518 aa).

A mitochondrial targeting signal region spans residues Ser-33–Leu-44. Ser-71 carries an O-linked (GlcNAc) serine glycan. Phe-228 contributes to the substrate binding site. Heme is bound at residue Cys-461.

It belongs to the cytochrome P450 family. In terms of assembly, interacts with cytosolic chaperones HSP70 and HSP90; this interaction is required for initial targeting to mitochondria. Interacts (via mitochondrial targeting signal) with TOMM40 (via N-terminus); this interaction is required for translocation across the mitochondrial outer membrane. Requires heme as cofactor.

It localises to the endoplasmic reticulum membrane. It is found in the mitochondrion inner membrane. The protein resides in the microsome membrane. Its subcellular location is the cytoplasm. It carries out the reaction an organic molecule + reduced [NADPH--hemoprotein reductase] + O2 = an alcohol + oxidized [NADPH--hemoprotein reductase] + H2O + H(+). The enzyme catalyses estrone + reduced [NADPH--hemoprotein reductase] + O2 = 2-hydroxyestrone + oxidized [NADPH--hemoprotein reductase] + H2O + H(+). It catalyses the reaction estrone + reduced [NADPH--hemoprotein reductase] + O2 = 4-hydroxyestrone + oxidized [NADPH--hemoprotein reductase] + H2O + H(+). The catalysed reaction is estrone + reduced [NADPH--hemoprotein reductase] + O2 = 6alpha-hydroxyestrone + oxidized [NADPH--hemoprotein reductase] + H2O + H(+). It carries out the reaction estrone + reduced [NADPH--hemoprotein reductase] + O2 = 15alpha-hydroxyestrone + oxidized [NADPH--hemoprotein reductase] + H2O + H(+). The enzyme catalyses estrone + reduced [NADPH--hemoprotein reductase] + O2 = 16alpha-hydroxyestrone + oxidized [NADPH--hemoprotein reductase] + H2O + H(+). It catalyses the reaction 17beta-estradiol + reduced [NADPH--hemoprotein reductase] + O2 = 2-hydroxy-17beta-estradiol + oxidized [NADPH--hemoprotein reductase] + H2O + H(+). The catalysed reaction is 17beta-estradiol + reduced [NADPH--hemoprotein reductase] + O2 = 4-hydroxy-17beta-estradiol + oxidized [NADPH--hemoprotein reductase] + H2O + H(+). It carries out the reaction 17beta-estradiol + reduced [NADPH--hemoprotein reductase] + O2 = 6alpha-hydroxy-17beta-estradiol + oxidized [NADPH--hemoprotein reductase] + H2O + H(+). The enzyme catalyses 17beta-estradiol + reduced [NADPH--hemoprotein reductase] + O2 = 7alpha-hydroxy-17beta-estradiol + oxidized [NADPH--hemoprotein reductase] + H2O + H(+). It catalyses the reaction 17beta-estradiol + reduced [NADPH--hemoprotein reductase] + O2 = 15alpha-hydroxy-17beta-estradiol + oxidized [NADPH--hemoprotein reductase] + H2O + H(+). The catalysed reaction is (5Z,8Z,11Z)-eicosatrienoate + reduced [NADPH--hemoprotein reductase] + O2 = 19-hydroxy-(5Z,8Z,11Z)-eicosatrienoate + oxidized [NADPH--hemoprotein reductase] + H2O + H(+). It carries out the reaction (5Z,8Z,11Z,14Z)-eicosatetraenoate + reduced [NADPH--hemoprotein reductase] + O2 = 16-hydroxy-(5Z,8Z,11Z,14Z)-eicosatetraenoate + oxidized [NADPH--hemoprotein reductase] + H2O + H(+). The enzyme catalyses (5Z,8Z,11Z,14Z)-eicosatetraenoate + reduced [NADPH--hemoprotein reductase] + O2 = 17-hydroxy-(5Z,8Z,11Z,14Z)-eicosatetraenoate + oxidized [NADPH--hemoprotein reductase] + H2O + H(+). It catalyses the reaction (5Z,8Z,11Z,14Z)-eicosatetraenoate + reduced [NADPH--hemoprotein reductase] + O2 = 18-hydroxy-(5Z,8Z,11Z,14Z)-eicosatetraenoate + oxidized [NADPH--hemoprotein reductase] + H2O + H(+). The catalysed reaction is (5Z,8Z,11Z,14Z)-eicosatetraenoate + reduced [NADPH--hemoprotein reductase] + O2 = 19-hydroxy-(5Z,8Z,11Z,14Z)-eicosatetraenoate + oxidized [NADPH--hemoprotein reductase] + H2O + H(+). It carries out the reaction (5Z,8Z,11Z,14Z,17Z)-eicosapentaenoate + reduced [NADPH--hemoprotein reductase] + O2 = 19-hydroxy-(5Z,8Z,11Z,14Z,17Z)-eicosapentaenoate + oxidized [NADPH--hemoprotein reductase] + H2O + H(+). The enzyme catalyses (5Z,8Z,11Z,14Z)-eicosatetraenoate + reduced [NADPH--hemoprotein reductase] + O2 = (8R,9S)-epoxy-(5Z,11Z,14Z)-eicosatrienoate + oxidized [NADPH--hemoprotein reductase] + H2O + H(+). It catalyses the reaction (5Z,8Z,11Z,14Z)-eicosatetraenoate + reduced [NADPH--hemoprotein reductase] + O2 = (11R,12S)-epoxy-(5Z,8Z,14Z)-eicosatrienoate + oxidized [NADPH--hemoprotein reductase] + H2O + H(+). The catalysed reaction is (5Z,8Z,11Z,14Z)-eicosatetraenoate + reduced [NADPH--hemoprotein reductase] + O2 = (14S,15R)-epoxy-(5Z,8Z,11Z)-eicosatrienoate + oxidized [NADPH--hemoprotein reductase] + H2O + H(+). It carries out the reaction (5Z,8Z,11Z,14Z)-eicosatetraenoate + reduced [NADPH--hemoprotein reductase] + O2 = (14R,15S)-epoxy-(5Z,8Z,11Z)-eicosatrienoate + oxidized [NADPH--hemoprotein reductase] + H2O + H(+). The enzyme catalyses (5Z,8Z,11Z,14Z,17Z)-eicosapentaenoate + reduced [NADPH--hemoprotein reductase] + O2 = (17R,18S)-epoxy-(5Z,8Z,11Z,14Z)-eicosatetraenoate + oxidized [NADPH--hemoprotein reductase] + H2O + H(+). It catalyses the reaction (4Z,7Z,10Z,13Z,16Z,19Z)-docosahexaenoate + reduced [NADPH--hemoprotein reductase] + O2 = (19S,20R)-epoxy-(4Z,7Z,10Z,13Z,16Z)-docosapentaenoate + oxidized [NADPH--hemoprotein reductase] + H2O + H(+). The catalysed reaction is (4Z,7Z,10Z,13Z,16Z,19Z)-docosahexaenoate + reduced [NADPH--hemoprotein reductase] + O2 = (19R,20S)-epoxy-(4Z,7Z,10Z,13Z,16Z)-docosapentaenoate + oxidized [NADPH--hemoprotein reductase] + H2O + H(+). It carries out the reaction all-trans-retinol + reduced [NADPH--hemoprotein reductase] + O2 = all-trans-retinal + oxidized [NADPH--hemoprotein reductase] + 2 H2O + H(+). The enzyme catalyses all-trans-retinal + reduced [NADPH--hemoprotein reductase] + O2 = all-trans-retinoate + oxidized [NADPH--hemoprotein reductase] + H2O + 2 H(+). It catalyses the reaction (13S)-hydroperoxy-(9Z,11E)-octadecadienoate = 13-oxo-(9Z,11E)-octadecadienoate + H2O. The catalysed reaction is (12S)-hydroperoxy-(5Z,8Z,10E,14Z)-eicosatetraenoate = 12-oxo-(5Z,8Z,10E,14Z)-eicosatetraenoate + H2O. It carries out the reaction (15S)-hydroperoxy-(5Z,8Z,11Z,13E)-eicosatetraenoate = 15-oxo-(5Z,8Z,11Z,13E)-eicosatetraenoate + H2O. The enzyme catalyses (5S)-hydroperoxy-(6E,8Z,11Z,14Z)-eicosatetraenoate = 5-oxo-(6E,8Z,11Z,14Z)-eicosatetraenoate + H2O. It functions in the pathway steroid hormone biosynthesis. Its pathway is lipid metabolism; fatty acid metabolism. The protein operates within cofactor metabolism; retinol metabolism. Its function is as follows. A cytochrome P450 monooxygenase involved in the metabolism of various endogenous substrates, including fatty acids, steroid hormones and vitamins. Mechanistically, uses molecular oxygen inserting one oxygen atom into a substrate, and reducing the second into a water molecule, with two electrons provided by NADPH via cytochrome P450 reductase (CPR; NADPH-ferrihemoprotein reductase). Catalyzes the hydroxylation of carbon-hydrogen bonds. Exhibits high catalytic activity for the formation of hydroxyestrogens from estrone (E1) and 17beta-estradiol (E2), namely 2-hydroxy E1 and E2, as well as D-ring hydroxylated E1 and E2 at the C15alpha and C16alpha positions. Displays different regioselectivities for polyunsaturated fatty acids (PUFA) hydroxylation. Catalyzes the epoxidation of double bonds of certain PUFA. Converts arachidonic acid toward epoxyeicosatrienoic acid (EET) regioisomers, 8,9-, 11,12-, and 14,15-EET, that function as lipid mediators in the vascular system. Displays an absolute stereoselectivity in the epoxidation of eicosapentaenoic acid (EPA) producing the 17(R),18(S) enantiomer. May play an important role in all-trans retinoic acid biosynthesis in extrahepatic tissues. Catalyzes two successive oxidative transformation of all-trans retinol to all-trans retinal and then to the active form all-trans retinoic acid. May also participate in eicosanoids metabolism by converting hydroperoxide species into oxo metabolites (lipoxygenase-like reaction, NADPH-independent). The polypeptide is Cytochrome P450 1A1 (CYP1A1) (Oryctolagus cuniculus (Rabbit)).